The sequence spans 331 residues: Holliday junction branch migration complex subunit RuvB (331 aa).

The segment at Met1–Tyr182 is large ATPase domain (RuvB-L). ATP-binding positions include Leu21, Arg22, Gly63, Lys66, Thr67, Thr68, Glu129 to Tyr131, Arg172, Tyr182, and Arg219. Thr67 provides a ligand contact to Mg(2+). The tract at residues Ser183–Gly254 is small ATPAse domain (RuvB-S). Residues Gly257–Ile331 form a head domain (RuvB-H) region. Arg310 and Arg315 together coordinate DNA.

It belongs to the RuvB family. As to quaternary structure, homohexamer. Forms an RuvA(8)-RuvB(12)-Holliday junction (HJ) complex. HJ DNA is sandwiched between 2 RuvA tetramers; dsDNA enters through RuvA and exits via RuvB. An RuvB hexamer assembles on each DNA strand where it exits the tetramer. Each RuvB hexamer is contacted by two RuvA subunits (via domain III) on 2 adjacent RuvB subunits; this complex drives branch migration. In the full resolvosome a probable DNA-RuvA(4)-RuvB(12)-RuvC(2) complex forms which resolves the HJ.

It localises to the cytoplasm. The catalysed reaction is ATP + H2O = ADP + phosphate + H(+). Functionally, the RuvA-RuvB-RuvC complex processes Holliday junction (HJ) DNA during genetic recombination and DNA repair, while the RuvA-RuvB complex plays an important role in the rescue of blocked DNA replication forks via replication fork reversal (RFR). RuvA specifically binds to HJ cruciform DNA, conferring on it an open structure. The RuvB hexamer acts as an ATP-dependent pump, pulling dsDNA into and through the RuvAB complex. RuvB forms 2 homohexamers on either side of HJ DNA bound by 1 or 2 RuvA tetramers; 4 subunits per hexamer contact DNA at a time. Coordinated motions by a converter formed by DNA-disengaged RuvB subunits stimulates ATP hydrolysis and nucleotide exchange. Immobilization of the converter enables RuvB to convert the ATP-contained energy into a lever motion, pulling 2 nucleotides of DNA out of the RuvA tetramer per ATP hydrolyzed, thus driving DNA branch migration. The RuvB motors rotate together with the DNA substrate, which together with the progressing nucleotide cycle form the mechanistic basis for DNA recombination by continuous HJ branch migration. Branch migration allows RuvC to scan DNA until it finds its consensus sequence, where it cleaves and resolves cruciform DNA. This Anaplasma marginale (strain St. Maries) protein is Holliday junction branch migration complex subunit RuvB.